Consider the following 294-residue polypeptide: UDP-3-O-acyl-N-acetylglucosamine deacetylase (294 aa).

Zn(2+) contacts are provided by His-75, His-232, and Asp-236. His-259 functions as the Proton donor in the catalytic mechanism.

The protein belongs to the LpxC family. Zn(2+) is required as a cofactor.

It carries out the reaction a UDP-3-O-[(3R)-3-hydroxyacyl]-N-acetyl-alpha-D-glucosamine + H2O = a UDP-3-O-[(3R)-3-hydroxyacyl]-alpha-D-glucosamine + acetate. Its pathway is glycolipid biosynthesis; lipid IV(A) biosynthesis; lipid IV(A) from (3R)-3-hydroxytetradecanoyl-[acyl-carrier-protein] and UDP-N-acetyl-alpha-D-glucosamine: step 2/6. Catalyzes the hydrolysis of UDP-3-O-myristoyl-N-acetylglucosamine to form UDP-3-O-myristoylglucosamine and acetate, the committed step in lipid A biosynthesis. The chain is UDP-3-O-acyl-N-acetylglucosamine deacetylase from Campylobacter jejuni subsp. doylei (strain ATCC BAA-1458 / RM4099 / 269.97).